A 714-amino-acid polypeptide reads, in one-letter code: Epithelial splicing regulatory protein 1 (714 aa).

RRM domains are found at residues 225-302 (TVIR…KATG), 326-406 (IIVR…KSTA), and 450-530 (DCVR…ACSA).

It belongs to the ESRP family.

The protein localises to the nucleus. Its function is as follows. mRNA splicing factor that regulates the formation of epithelial cell-specific isoforms. Specifically regulates the expression of FGFR2-IIIb, an epithelial cell-specific isoform of fgfr2. Acts by directly binding specific sequences in mRNAs. Binds the GU-rich sequence motifs in the ISE/ISS-3, a cis-element regulatory region present in the mRNA of fgfr2. The protein is Epithelial splicing regulatory protein 1 (esrp1) of Danio rerio (Zebrafish).